Here is a 678-residue protein sequence, read N- to C-terminus: Penicillin-binding protein activator LpoA (678 aa).

Residues 1–26 form the signal peptide; it reads MVPSTFSRLKAARCLPVVLAALIFAG. A lipid anchor (N-palmitoyl cysteine) is attached at Cys-27. The S-diacylglycerol cysteine moiety is linked to residue Cys-27. 2 disordered regions span residues 304–338 and 495–530; these read AEQPQPQTVDGVASPAQASVSDLTGEQPAAQSVPV and IALTGSPITPRETTDSGMTTNNPTLQTTPTDDQFTN. Low complexity predominate over residues 513-529; sequence TTNNPTLQTTPTDDQFT.

This sequence belongs to the LpoA family. As to quaternary structure, interacts with PBP1a.

The protein localises to the cell outer membrane. In terms of biological role, regulator of peptidoglycan synthesis that is essential for the function of penicillin-binding protein 1A (PBP1a). The polypeptide is Penicillin-binding protein activator LpoA (Escherichia coli O6:H1 (strain CFT073 / ATCC 700928 / UPEC)).